The sequence spans 475 residues: ATP-dependent protease ATPase subunit HslU1 (475 aa).

The N-terminal 27 residues, M1–G27, are a transit peptide targeting the mitochondrion. ATP contacts are provided by residues I66, G108–E113, D286, E353, and R425.

It belongs to the ClpX chaperone family. HslU subfamily. As to quaternary structure, a double ring-shaped homohexamer of HslV is capped on each side by a ring-shaped HslU homohexamer. The assembly of the HslU/HslV complex (HslVU) is dependent on binding of ATP.

It localises to the mitochondrion matrix. The protein resides in the kinetoplast. Its function is as follows. ATPase subunit of a proteasome-like degradation complex; this subunit has chaperone activity. The binding of ATP and its subsequent hydrolysis by HslU are essential for unfolding of protein substrates subsequently hydrolyzed by HslV. HslU recognizes the N-terminal part of its protein substrates and unfolds these before they are guided to HslV for hydrolysis. The HslVU protease complex functions in mitochondrial DNA replication by regulating DNA helicase PIF2 protein levels. This chain is ATP-dependent protease ATPase subunit HslU1 (HslU1), found in Trypanosoma brucei brucei (strain 927/4 GUTat10.1).